The sequence spans 405 residues: Aspartokinase (405 aa).

ACT domains are found at residues 267–344 (VSME…AKVS) and 345–405 (IVGV…QLDQ).

It belongs to the aspartokinase family.

The catalysed reaction is L-aspartate + ATP = 4-phospho-L-aspartate + ADP. It functions in the pathway amino-acid biosynthesis; L-lysine biosynthesis via DAP pathway; (S)-tetrahydrodipicolinate from L-aspartate: step 1/4. The protein operates within amino-acid biosynthesis; L-methionine biosynthesis via de novo pathway; L-homoserine from L-aspartate: step 1/3. Its pathway is amino-acid biosynthesis; L-threonine biosynthesis; L-threonine from L-aspartate: step 1/5. The sequence is that of Aspartokinase (lysC) from Helicobacter pylori (strain J99 / ATCC 700824) (Campylobacter pylori J99).